We begin with the raw amino-acid sequence, 75 residues long: Conotoxin Im23.5 (75 aa).

Positions M1–A23 are cleaved as a signal peptide. Disulfide bonds link C24-C28, C37-C40, and C41-C43. The propeptide occupies C24–R50.

In terms of tissue distribution, expressed by the venom duct.

It localises to the secreted. In terms of biological role, probable neurotoxin. The chain is Conotoxin Im23.5 from Conus imperialis (Imperial cone).